The sequence spans 692 residues: Polyphosphate kinase (692 aa).

Asn57 contributes to the ATP binding site. Mg(2+) is bound by residues Arg383 and Arg413. His443 acts as the Phosphohistidine intermediate in catalysis. Positions 476, 572, and 600 each coordinate ATP.

Belongs to the polyphosphate kinase 1 (PPK1) family. Mg(2+) is required as a cofactor. Post-translationally, an intermediate of this reaction is the autophosphorylated ppk in which a phosphate is covalently linked to a histidine residue through a N-P bond.

The catalysed reaction is [phosphate](n) + ATP = [phosphate](n+1) + ADP. Its function is as follows. Catalyzes the reversible transfer of the terminal phosphate of ATP to form a long-chain polyphosphate (polyP). This Acinetobacter baumannii (strain AYE) protein is Polyphosphate kinase.